The chain runs to 291 residues: Shikimate dehydrogenase (NADP(+)) (291 aa).

Shikimate contacts are provided by residues 14–16 and Thr61; that span reads SKS. Lys65 acts as the Proton acceptor in catalysis. NADP(+) is bound at residue Glu77. Shikimate contacts are provided by Asn86 and Asp102. NADP(+) contacts are provided by residues 139–143, 164–169, and Leu232; these read GAGGA and NRTFSR. Tyr234 contacts shikimate. Gly256 lines the NADP(+) pocket.

This sequence belongs to the shikimate dehydrogenase family. In terms of assembly, homodimer.

It catalyses the reaction shikimate + NADP(+) = 3-dehydroshikimate + NADPH + H(+). It participates in metabolic intermediate biosynthesis; chorismate biosynthesis; chorismate from D-erythrose 4-phosphate and phosphoenolpyruvate: step 4/7. Functionally, involved in the biosynthesis of the chorismate, which leads to the biosynthesis of aromatic amino acids. Catalyzes the reversible NADPH linked reduction of 3-dehydroshikimate (DHSA) to yield shikimate (SA). The polypeptide is Shikimate dehydrogenase (NADP(+)) (Blochmanniella pennsylvanica (strain BPEN)).